Here is a 365-residue protein sequence, read N- to C-terminus: GTPase Obg (365 aa).

An Obg domain is found at 1–159; it reads MKFIDEARIE…RMLKLELKVL (159 aa). Residues 160 to 334 enclose the OBG-type G domain; that stretch reads ADVGLLGMPN…LIYAIKDHLQ (175 aa). GTP is bound by residues 166–173, 191–195, 213–216, 284–287, and 315–317; these read GMPNAGKS, FTTLH, DIPG, NKLD, and SAL. Residues Ser-173 and Thr-193 each contribute to the Mg(2+) site.

Belongs to the TRAFAC class OBG-HflX-like GTPase superfamily. OBG GTPase family. As to quaternary structure, monomer. The cofactor is Mg(2+).

The protein localises to the cytoplasm. An essential GTPase which binds GTP, GDP and possibly (p)ppGpp with moderate affinity, with high nucleotide exchange rates and a fairly low GTP hydrolysis rate. Plays a role in control of the cell cycle, stress response, ribosome biogenesis and in those bacteria that undergo differentiation, in morphogenesis control. This Cupriavidus necator (strain ATCC 17699 / DSM 428 / KCTC 22496 / NCIMB 10442 / H16 / Stanier 337) (Ralstonia eutropha) protein is GTPase Obg.